Reading from the N-terminus, the 33-residue chain is Cytochrome b6-f complex subunit 6 (33 aa).

The chain crosses the membrane as a helical span at residues 4-24; that stretch reads ITIISYFGLLLASIIFTLVLF.

It belongs to the PetL family. In terms of assembly, the 4 large subunits of the cytochrome b6-f complex are cytochrome b6, subunit IV (17 kDa polypeptide, PetD), cytochrome f and the Rieske protein, while the 4 small subunits are PetG, PetL, PetM and PetN. The complex functions as a dimer.

Its subcellular location is the plastid. It localises to the chloroplast thylakoid membrane. In terms of biological role, component of the cytochrome b6-f complex, which mediates electron transfer between photosystem II (PSII) and photosystem I (PSI), cyclic electron flow around PSI, and state transitions. PetL is important for photoautotrophic growth as well as for electron transfer efficiency and stability of the cytochrome b6-f complex. This Pinus mugo (Dwarf mountain pine) protein is Cytochrome b6-f complex subunit 6.